Here is a 359-residue protein sequence, read N- to C-terminus: UDP-N-acetylglucosamine--N-acetylmuramyl-(pentapeptide) pyrophosphoryl-undecaprenol N-acetylglucosamine transferase (359 aa).

Residues 15–17 (TGG), N127, R166, S191, I245, 264–269 (ALTVSE), and Q290 contribute to the UDP-N-acetyl-alpha-D-glucosamine site.

It belongs to the glycosyltransferase 28 family. MurG subfamily.

Its subcellular location is the cell inner membrane. The enzyme catalyses di-trans,octa-cis-undecaprenyl diphospho-N-acetyl-alpha-D-muramoyl-L-alanyl-D-glutamyl-meso-2,6-diaminopimeloyl-D-alanyl-D-alanine + UDP-N-acetyl-alpha-D-glucosamine = di-trans,octa-cis-undecaprenyl diphospho-[N-acetyl-alpha-D-glucosaminyl-(1-&gt;4)]-N-acetyl-alpha-D-muramoyl-L-alanyl-D-glutamyl-meso-2,6-diaminopimeloyl-D-alanyl-D-alanine + UDP + H(+). It participates in cell wall biogenesis; peptidoglycan biosynthesis. Functionally, cell wall formation. Catalyzes the transfer of a GlcNAc subunit on undecaprenyl-pyrophosphoryl-MurNAc-pentapeptide (lipid intermediate I) to form undecaprenyl-pyrophosphoryl-MurNAc-(pentapeptide)GlcNAc (lipid intermediate II). In Pseudomonas putida (strain ATCC 700007 / DSM 6899 / JCM 31910 / BCRC 17059 / LMG 24140 / F1), this protein is UDP-N-acetylglucosamine--N-acetylmuramyl-(pentapeptide) pyrophosphoryl-undecaprenol N-acetylglucosamine transferase.